Consider the following 347-residue polypeptide: MSKKIKVGIVGATGYTGVELLRLLAAHPDVEVAAVTSRSEAGTAVADYFPSLRGVYGLAFQTPDEAGLEQCDIVFFATPNGIAMKDAPRLIEQGVRVIDLSADFRIWDIPTWEHWYGMPHAAPGLVSQAVYGLSELNREAVAQARLVANPGCYPTCVSLPLVPLLRQCRLKPGMPLIADCKSGVSGAGRKGNVGSLLCEVGDNFKAYGIAGHRHLPEIRQTIAGLQDGIAEGFVFTPHLAPMIRGMHATVYLHLSDGICPETILRDYYRDSLFVDILPAGSTPETRSVRGANLCRISIQQAAQSDVWVVLSVIDNLVKGAAGQAVQNMNIMFGLKETHGLGAIPLLP.

The active site involves cysteine 152.

It belongs to the NAGSA dehydrogenase family. Type 1 subfamily.

The protein resides in the cytoplasm. The enzyme catalyses N-acetyl-L-glutamate 5-semialdehyde + phosphate + NADP(+) = N-acetyl-L-glutamyl 5-phosphate + NADPH + H(+). It participates in amino-acid biosynthesis; L-arginine biosynthesis; N(2)-acetyl-L-ornithine from L-glutamate: step 3/4. Functionally, catalyzes the NADPH-dependent reduction of N-acetyl-5-glutamyl phosphate to yield N-acetyl-L-glutamate 5-semialdehyde. This Neisseria meningitidis serogroup C / serotype 2a (strain ATCC 700532 / DSM 15464 / FAM18) protein is N-acetyl-gamma-glutamyl-phosphate reductase.